Consider the following 523-residue polypeptide: Cytokinin dehydrogenase 3 (523 aa).

An N-terminal signal peptide occupies residues 1 to 31 (MASYNLRSQVRLIAITIVIIITLSTPITTNT). An FAD-binding PCMH-type domain is found at 66-243 (TKIFPSAVLI…TRARIKLEVA (178 aa)). Residues Ala-100, Gly-102, and Gly-104 each contribute to the FAD site. His-105 carries the pros-8alpha-FAD histidine modification. FAD-binding residues include Ser-106 and Gln-110. N-linked (GlcNAc...) asparagine glycosylation occurs at Asn-153. 5 residues coordinate FAD: Asp-167, Thr-172, Ser-178, Ile-182, and Ile-233. Asn-408 is a glycosylation site (N-linked (GlcNAc...) asparagine). Tyr-476, Ser-511, and Gln-514 together coordinate FAD.

Belongs to the oxygen-dependent FAD-linked oxidoreductase family. FAD serves as cofactor. In terms of tissue distribution, very weak expression in the young shoot tissues around two weeks after germination. Present in the center of the floral meristem and the boundary between long stamen primordia and gynoecial primordia.

Its subcellular location is the endoplasmic reticulum. The protein localises to the vacuole. It catalyses the reaction N(6)-dimethylallyladenine + A + H2O = 3-methyl-2-butenal + adenine + AH2. Functionally, catalyzes the oxidation of cytokinins, a family of N(6)-substituted adenine derivatives that are plant hormones, where the substituent is an isopentenyl group. Catalyzes in vitro the oxidation of various types of cytokinin nucleotides that are known as direct products of cytokinin biosynthesis. In association with CKX5 regulates the activity of the reproductive meristems, flower organ size and ovule formation. The polypeptide is Cytokinin dehydrogenase 3 (CKX3) (Arabidopsis thaliana (Mouse-ear cress)).